Reading from the N-terminus, the 796-residue chain is MKHKLDVTINELRLKSIRKIVKRINTWSDEVKSYSDDALKQKTIEFKERLASGVDTLDTLLPEAYAVAREASWRVLGMYPKEVQLIGAIVLHEGNIAEMQTGEGKTLTATMPLYLNALSGKGTYLITTNDYLAKRDFEEMQPLYEWLGLTASLGFVDIVDYEYQKGEKRNIYEHDIIYTTNGRLGFDYLIDNLADSAEGKFLPQLNYGIIDEVDSIILDAAQTPLVISGAPRLQSNLFHIVKEFVDTLIEDVHFKMKKTKKEIWLLNQGIEAAQSYFNVEDLYSEQAMVLVRNINLALRAQYLFESNVDYFVYNGDIVLIDRITGRMLPGTKLQAGLHQAIEAKEGMEVSTDKSVMATITFQNLFKLFESFSGMTATGKLGESEFFDLYSKIVVQAPTDKAIQRIDEPDKVFRSVDEKNIAMIHDIVELHETGRPVLLITRTAEAAEYFSKVLFQMDIPNNLLIAQNVAKEAQMIAEAGQIGSMTVATSMAGRGTDIKLGEGVEALGGLAVIIHEHMENSRVDRQLRGRSGRQGDPGSSCIYISLDDYLVKRWSDSNLAENNQLYSLDAQRLSQSNLFNRKVKQIVVKAQRISEEQGVKAREMANEFEKSISIQRDLVYEERNRVLEIDDAENRDFKALAKDVFEMFVNEEKVLTKSRVVEYIYQNLSFQFNKDVACVNFKDKQAVVTFLLEQFEKQLALNRKNMQSAYYYNIFVQKVFLKAIDSCWLEQVDYLQQLKASVNQRQNGQRNAIFEYHRVALDSFEVMTRNIKKRMVKNICQSMITFDKEGMPVIHFP.

ATP-binding positions include Q84, 102–106 (GEGKT), and D496.

The protein belongs to the SecA family. As to quaternary structure, monomer and homodimer. Part of the essential Sec protein translocation apparatus which comprises SecA, SecYEG and auxiliary proteins SecDF. Other proteins may also be involved.

It localises to the cell membrane. The protein localises to the cytoplasm. It catalyses the reaction ATP + H2O + cellular proteinSide 1 = ADP + phosphate + cellular proteinSide 2.. In terms of biological role, part of the Sec protein translocase complex. Interacts with the SecYEG preprotein conducting channel. Has a central role in coupling the hydrolysis of ATP to the transfer of proteins into and across the cell membrane, serving as an ATP-driven molecular motor driving the stepwise translocation of polypeptide chains across the membrane. This chain is Protein translocase subunit SecA 2, found in Staphylococcus aureus (strain Mu3 / ATCC 700698).